The primary structure comprises 802 residues: Pyrophosphate-energized membrane proton pump 3 (802 aa).

Helical transmembrane passes span 41–61, 66–86, 118–138, 160–180, 206–226, and 246–266; these read LNVRALSVLLLLSFGGIFYMG, PIIVFVFVVCIISFMLSVYLT, YGTISKMAFLLAFVILCIYLF, VAAFLLGALCSGIAGYVGMWV, AGGFSALVVVGMAVIGIAILY, and LPLLLVGYGFGASFVALFAQL. Position 273 (lysine 273) interacts with substrate. Positions 276, 280, and 306 each coordinate Mg(2+). A run of 5 helical transmembrane segments spans residues 348–368, 386–406, 421–441, 468–491, and 511–531; these read FILFPLVVHSFDLVISSIGIL, MVVLQKGYSLTIILAVLTFGA, WLNFFMCGLVGIITAYVFVWI, IIAGVSLGLESTALPVLVISVAII, and GGLFGTAVATMGMLSTAAYVL. Mg(2+) contacts are provided by aspartate 541 and asparagine 568. A run of 4 helical transmembrane segments spans residues 577 to 597, 615 to 635, 686 to 706, and 716 to 736; these read FAIGSAALASFLLFSAYMDEV, VFIGGLLGAMLIFLFSAWACA, GALAIISPIAVGFVFRILGYY, and VVAAMLMFATVCGILMALFLN. Residues aspartate 743 and aspartate 773 each coordinate Mg(2+). Lysine 776 contributes to the substrate binding site. A helical membrane pass occupies residues 782–802; that stretch reads SIHVLIKMLATITLVMAPIFL.

This sequence belongs to the H(+)-translocating pyrophosphatase (TC 3.A.10) family. K(+)-insensitive subfamily. In terms of assembly, monomer.

The protein resides in the golgi apparatus membrane. It catalyses the reaction diphosphate + H2O + H(+)(in) = 2 phosphate + 2 H(+)(out). This chain is Pyrophosphate-energized membrane proton pump 3 (AVPL2), found in Arabidopsis thaliana (Mouse-ear cress).